Consider the following 449-residue polypeptide: Putative F-box/LRR-repeat protein 23 (449 aa).

LRR repeat units follow at residues 14–37 (KLWR…HLKL) and 39–64 (GNGL…DLRR). Positions 178-225 (LRNWAELPSKLTSSILLRLGAIEILQNAQKVCKPWHRVCKDPSMWRKI) constitute an F-box domain. LRR repeat units lie at residues 261 to 286 (WYYG…GLVR), 287 to 311 (CFPI…LEVS), 312 to 337 (YCLF…KLNR), 344 to 367 (SNSG…HLQL), 369 to 394 (GNGL…DLRQ), and 401 to 427 (VGDL…DSDD).

This Arabidopsis thaliana (Mouse-ear cress) protein is Putative F-box/LRR-repeat protein 23 (FBL23).